We begin with the raw amino-acid sequence, 360 residues long: BLOC-1-related complex subunit 6 (360 aa).

The interval 1–201 is disordered; that stretch reads MEAAQGRLGP…TGAGGGRRAT (201 aa). A compositionally biased stretch (polar residues) spans 23-33; the sequence is ATFSGRPSRTP. Threonine 41 is modified (phosphothreonine). Serine 130 carries the phosphoserine modification. The segment covering 144–155 has biased composition (acidic residues); that stretch reads EGDDDDDEDEEA. Serine 173 is modified (phosphoserine). Positions 179–198 are enriched in gly residues; that stretch reads GACGGGGSSSSGETGAGGGR. The residue at position 201 (threonine 201) is a Phosphothreonine. Serine 204 carries the phosphoserine modification.

Belongs to the BORCS6 family. As to quaternary structure, component of the BLOC-one-related complex (BORC) which is composed of BLOC1S1, BLOC1S2, BORCS5, BORCS6, BORCS7, BORCS8, KXD1 and SNAPIN.

The protein localises to the lysosome membrane. As part of the BORC complex may play a role in lysosomes movement and localization at the cell periphery. Associated with the cytosolic face of lysosomes, the BORC complex may recruit ARL8B and couple lysosomes to microtubule plus-end-directed kinesin motor. In Mus musculus (Mouse), this protein is BLOC-1-related complex subunit 6.